The primary structure comprises 263 residues: Uracil-DNA glycosylase (263 aa).

Catalysis depends on Asp94, which acts as the Proton acceptor.

It belongs to the uracil-DNA glycosylase (UDG) superfamily. UNG family.

The protein resides in the cytoplasm. It carries out the reaction Hydrolyzes single-stranded DNA or mismatched double-stranded DNA and polynucleotides, releasing free uracil.. Its function is as follows. Excises uracil residues from the DNA which can arise as a result of misincorporation of dUMP residues by DNA polymerase or due to deamination of cytosine. This Ralstonia pickettii (strain 12J) protein is Uracil-DNA glycosylase.